We begin with the raw amino-acid sequence, 1214 residues long: NKGKTFTSKYVIMTSNTETPVKPTSRRAGAFYRRVMIVDVTNNAVEKWKSDNPGKAVPKWCFNKDFSHLSLSLRGTEAYCKEYVLDPTGRNHQSRRAPPPQQVTLEQLAQKMVVQHTTNTSEFVTQAGDVPVFGFVCQNNEIDTVYNLLAAVKARYGANFNLYKGMVRTAHENSGCGAHVHVISREDNFRGKVFTVSRSRLESVPHLEGDSFRRSLGVVMSDKDVTTMFYYIKGKVINDQVNLTELPANQHVVTVHTVYDMAWALRRHLKWSGQWQLIKAAFEIMCYPDAAACALRNWMDSTDFSEEHVVTQFIAPGGTIILESCHGARMWATGKRLIRAGGITEAGGPQGGVRFAGLGARNVPWSEILREFMTLISHIWSQIKGATVVLTALTFYLKRFRPRIEAKGKNKNKGARKNTGVALTDDEYDEWRQYRTEKNLDLTVEDFLQLRHRAAMGADDSDAVKFRCWYSERQRNYHDLEDVTIIGRGGVKRELIRKGPLRPRGNDYYDEPDDWYSEGVIDGVAHKNAIVSVDDVDGMHKGYAIHIGHGVYISLKHVVSGNARILSEEPKNLTFTGELATFRLNNILPTAVPVGTSKPIKDPWGNPVSTDWQFKNYNTTSGNIYGACGSSCSLTRQGDCGLPYVDDHGVVVGLHAGSGGDKCPSRKLIVPYAKVDMRVRDTCTKQCYKDNSPTISYKGLLVKETGEPRTIMKGTRLHVSPAHTDDYEECTHQPASLGAGDPRCPISLTGIMVNNLQPYTEASPGPDTATLNRVSKMLTSHMEGYVQKSQTEEGYGSAFYMLNHDTSCGPYIGGRKKDHVKDGVLDKNLLDLLSSKWNRAKLGLALPHEYALGLKDELRPKDKVAVGKRRLIWGCDVGVSTVCRAAFKRVSESIMANHALGFIQVGINMDGPAVEDLFKRLERPKHDRYCVDYSKWDSTQPPKVTSQSIDILRHFTDKSPIVDSACATLKSNPIGIFNGVAFKVAGGLPSGMPLTSIINSLNHCLMVGSAVVKALEDSGVQVSWNIFDSMDLFTYGDDGVYIVPPLISSVMPNVFANLKQFGLKPTRTDKSDAEITPIPADEPVEFLKRTIVRTENGIRALLDRSSIIRQFYYIKAENTENWTIPPKKIDTPSRGQQLYNACLYASQHGEEFYTNKIIPLVQRAIEFEGLHIEVPEFHHAVAAYNGYFNGTEGQPNQIAFASGGLGLSSEVFEN.

The SF3 helicase domain occupies 1–55; it reads NKGKTFTSKYVIMTSNTETPVKPTSRRAGAFYRRVMIVDVTNNAVEKWKSDNPGK. The residue at position 428 (Tyr428) is an O-(5'-phospho-RNA)-tyrosine. Residues 523-676 enclose the Peptidase C24 domain; it reads GVAHKNAIVS…KLIVPYAKVD (154 aa). Catalysis depends on for 3CLpro activity residues His557, Glu578, and Cys640. Residues 926 to 1051 form the RdRp catalytic domain; that stretch reads HDRYCVDYSK…IVPPLISSVM (126 aa).

In terms of processing, specific enzymatic cleavages in vivo yield mature proteins. Pro-Pol is first autocatalytically cleaved, then processes the whole polyprotein. VPg is uridylylated by the polymerase and is covalently attached to the 5'-end of the polyadenylated genomic and subgenomic RNAs. This uridylylated form acts as a nucleotide-peptide primer for the polymerase.

It catalyses the reaction a ribonucleoside 5'-triphosphate + H2O = a ribonucleoside 5'-diphosphate + phosphate + H(+). The enzyme catalyses RNA(n) + a ribonucleoside 5'-triphosphate = RNA(n+1) + diphosphate. It carries out the reaction Endopeptidase with a preference for cleavage when the P1 position is occupied by Glu-|-Xaa and the P1' position is occupied by Gly-|-Yaa.. NTPase presumably plays a role in replication. Despite having similarities with helicases, does not seem to display any helicase activity. In terms of biological role, viral genome-linked protein is covalently linked to the 5'-end of the positive-strand, negative-strand genomic RNAs and subgenomic RNA. Acts as a genome-linked replication primer. May recruit ribosome to viral RNA thereby promoting viral proteins translation. Functionally, protease-polymerase p76 processes the polyprotein: Pro-Pol is first released by autocleavage, then all other proteins are cleaved. Cleaves host translation initiation factor eIF4G1 and eIF4G2 thereby inducing a shutdown of host protein synthesis. This shutdown may not prevent viral mRNA from being translated since viral Vpg replaces the cap. May cleave host polyadenylate-binding protein thereby inhibiting cellular translation. It is also an RNA-directed RNA polymerase which replicates genomic and antigenomic viral RNA by recognizing specific signals. Also transcribes a subgenomic mRNA by initiating RNA synthesis internally on antigenomic RNA. This sgRNA codes for structural proteins. Catalyzes the covalent attachment VPg with viral RNAs. The polypeptide is Genome polyprotein (San Miguel sea lion virus serotype 4 (SMSV-4)).